The following is a 100-amino-acid chain: Urease subunit gamma (100 aa).

This sequence belongs to the urease gamma subunit family. In terms of assembly, heterotrimer of UreA (gamma), UreB (beta) and UreC (alpha) subunits. Three heterotrimers associate to form the active enzyme.

It localises to the cytoplasm. The catalysed reaction is urea + 2 H2O + H(+) = hydrogencarbonate + 2 NH4(+). Its pathway is nitrogen metabolism; urea degradation; CO(2) and NH(3) from urea (urease route): step 1/1. This is Urease subunit gamma from Burkholderia thailandensis (strain ATCC 700388 / DSM 13276 / CCUG 48851 / CIP 106301 / E264).